A 311-amino-acid chain; its full sequence is Ciliary microtubule inner protein 2B (311 aa).

Disordered regions lie at residues proline 64–proline 93 and glutamine 150–methionine 183.

It belongs to the CIMIP2 family. As to expression, expressed in airway epithelial cells.

Its subcellular location is the cytoplasm. The protein resides in the cytoskeleton. It localises to the cilium axoneme. Its function is as follows. Microtubule inner protein (MIP) part of the dynein-decorated doublet microtubules (DMTs) in cilia axoneme, which is required for motile cilia beating. The chain is Ciliary microtubule inner protein 2B (cimip2b) from Xenopus laevis (African clawed frog).